Consider the following 490-residue polypeptide: Hippocampus abundant transcript 1 protein (490 aa).

N-acetylmethionine is present on methionine 1. At methionine 1–alanine 40 the chain is on the extracellular side. The N-linked (GlcNAc...) asparagine glycan is linked to asparagine 12. A helical membrane pass occupies residues valine 41–valine 61. Over leucine 62–asparagine 74 the chain is Cytoplasmic. The helical transmembrane segment at glycine 75–leucine 95 threads the bilayer. At serine 96–serine 103 the chain is on the extracellular side. The chain crosses the membrane as a helical span at residues phenylalanine 104–tryptophan 124. Over tryptophan 125–tyrosine 126 the chain is Cytoplasmic. A helical transmembrane segment spans residues phenylalanine 127–valine 147. Residues alanine 148–tyrosine 160 lie on the Extracellular side of the membrane. A helical membrane pass occupies residues glycine 161–leucine 181. Residues glycine 182–serine 188 are Cytoplasmic-facing. A helical membrane pass occupies residues leucine 189–valine 209. Over proline 210–aspartate 243 the chain is Extracellular. A helical membrane pass occupies residues serine 244–tyrosine 264. The Cytoplasmic segment spans residues serine 265–alanine 284. The helical transmembrane segment at phenylalanine 285–methionine 305 threads the bilayer. Residues arginine 306 to threonine 313 lie on the Extracellular side of the membrane. A helical transmembrane segment spans residues isoleucine 314–proline 334. The Cytoplasmic portion of the chain corresponds to tryptophan 335–methionine 337. A helical transmembrane segment spans residues tryptophan 338–valine 358. Residues serine 359–glycine 379 lie on the Extracellular side of the membrane. A helical transmembrane segment spans residues leucine 380–leucine 400. Over lysine 401 to proline 427 the chain is Cytoplasmic. A helical membrane pass occupies residues glycine 428–isoleucine 448. Residues proline 449 to valine 490 are Extracellular-facing. The N-linked (GlcNAc...) asparagine glycan is linked to asparagine 453. Residues glycine 466–valine 490 form a disordered region.

This sequence belongs to the major facilitator superfamily. As to expression, expressed in various tissues.

The protein localises to the membrane. The polypeptide is Hippocampus abundant transcript 1 protein (Mus musculus (Mouse)).